Here is a 179-residue protein sequence, read N- to C-terminus: Large ribosomal subunit protein uL5 (179 aa).

The protein belongs to the universal ribosomal protein uL5 family. In terms of assembly, part of the 50S ribosomal subunit; part of the 5S rRNA/L5/L18/L25 subcomplex. Contacts the 5S rRNA and the P site tRNA. Forms a bridge to the 30S subunit in the 70S ribosome.

In terms of biological role, this is one of the proteins that bind and probably mediate the attachment of the 5S RNA into the large ribosomal subunit, where it forms part of the central protuberance. In the 70S ribosome it contacts protein S13 of the 30S subunit (bridge B1b), connecting the 2 subunits; this bridge is implicated in subunit movement. Contacts the P site tRNA; the 5S rRNA and some of its associated proteins might help stabilize positioning of ribosome-bound tRNAs. The chain is Large ribosomal subunit protein uL5 from Anoxybacillus flavithermus (strain DSM 21510 / WK1).